Reading from the N-terminus, the 348-residue chain is Phospho-2-dehydro-3-deoxyheptonate aldolase, Trp-sensitive (348 aa).

This sequence belongs to the class-I DAHP synthase family.

It carries out the reaction D-erythrose 4-phosphate + phosphoenolpyruvate + H2O = 7-phospho-2-dehydro-3-deoxy-D-arabino-heptonate + phosphate. It participates in metabolic intermediate biosynthesis; chorismate biosynthesis; chorismate from D-erythrose 4-phosphate and phosphoenolpyruvate: step 1/7. Its function is as follows. Stereospecific condensation of phosphoenolpyruvate (PEP) and D-erythrose-4-phosphate (E4P) giving rise to 3-deoxy-D-arabino-heptulosonate-7-phosphate (DAHP). This Salmonella typhimurium (strain LT2 / SGSC1412 / ATCC 700720) protein is Phospho-2-dehydro-3-deoxyheptonate aldolase, Trp-sensitive (aroH).